The following is a 457-amino-acid chain: Dynein regulatory complex protein 10 (457 aa).

Coiled-coil stretches lie at residues 101-127, 209-258, and 292-381; these read EKASILQRKQKELEKGEEAEEDWDQER, IQDI…LHQV, and QQDI…AESE. One can recognise an IQ domain in the interval 397–426; the sequence is MVRAATLIQAMWKGYLVRSMLRSRKKKRVK. The disordered stretch occupies residues 419-457; that stretch reads SRKKKRVKSKGKDKGKGKEKPKEEKGKEKKAKGKGKGKK. Over residues 428–445 the composition is skewed to basic and acidic residues; that stretch reads KGKDKGKGKEKPKEEKGK. The segment covering 446 to 457 has biased composition (basic residues); that stretch reads EKKAKGKGKGKK.

Belongs to the DRC10 family. As to quaternary structure, component of the nexin-dynein regulatory complex (N-DRC). Interacts with CFAP52.

The protein resides in the cytoplasm. Its subcellular location is the cytoskeleton. The protein localises to the flagellum axoneme. In terms of biological role, component of the nexin-dynein regulatory complex (N-DRC), a key regulator of ciliary/flagellar motility which maintains the alignment and integrity of the distal axoneme and regulates microtubule sliding in motile axonemes. The chain is Dynein regulatory complex protein 10 (Iqcd) from Rattus norvegicus (Rat).